Here is a 236-residue protein sequence, read N- to C-terminus: tRNA (guanine-N(1)-)-methyltransferase (236 aa).

S-adenosyl-L-methionine contacts are provided by residues Gly-110 and 129–134 (LGDFVL).

The protein belongs to the RNA methyltransferase TrmD family. As to quaternary structure, homodimer.

It is found in the cytoplasm. It carries out the reaction guanosine(37) in tRNA + S-adenosyl-L-methionine = N(1)-methylguanosine(37) in tRNA + S-adenosyl-L-homocysteine + H(+). Its function is as follows. Specifically methylates guanosine-37 in various tRNAs. The protein is tRNA (guanine-N(1)-)-methyltransferase of Clostridium perfringens (strain SM101 / Type A).